Reading from the N-terminus, the 184-residue chain is Guanylate kinase (184 aa).

Residues 5-183 (KKLIIITGPS…TVKEVLKIIK (179 aa)) enclose the Guanylate kinase-like domain. Residue 12 to 19 (GPSGVGKG) participates in ATP binding.

The protein belongs to the guanylate kinase family.

It is found in the cytoplasm. It carries out the reaction GMP + ATP = GDP + ADP. In terms of biological role, essential for recycling GMP and indirectly, cGMP. This Prochlorococcus marinus subsp. pastoris (strain CCMP1986 / NIES-2087 / MED4) protein is Guanylate kinase.